Reading from the N-terminus, the 159-residue chain is Small ribosomal subunit protein uS9 (159 aa).

It belongs to the universal ribosomal protein uS9 family.

The sequence is that of Small ribosomal subunit protein uS9 from Rickettsia conorii (strain ATCC VR-613 / Malish 7).